A 98-amino-acid chain; its full sequence is NADH-ubiquinone oxidoreductase chain 4L (98 aa).

The next 3 membrane-spanning stretches (helical) occupy residues M1 to L21, S29 to L49, and I61 to V81.

It belongs to the complex I subunit 4L family. As to quaternary structure, core subunit of respiratory chain NADH dehydrogenase (Complex I) which is composed of 45 different subunits.

Its subcellular location is the mitochondrion inner membrane. The enzyme catalyses a ubiquinone + NADH + 5 H(+)(in) = a ubiquinol + NAD(+) + 4 H(+)(out). In terms of biological role, core subunit of the mitochondrial membrane respiratory chain NADH dehydrogenase (Complex I) which catalyzes electron transfer from NADH through the respiratory chain, using ubiquinone as an electron acceptor. Part of the enzyme membrane arm which is embedded in the lipid bilayer and involved in proton translocation. The polypeptide is NADH-ubiquinone oxidoreductase chain 4L (MT-ND4L) (Vampyrodes caraccioli (Great stripe-faced bat)).